The chain runs to 597 residues: Miltiradiene synthase KSL2, chloroplastic (597 aa).

A chloroplast-targeting transit peptide spans 1 to 51 (MSLAFNLRAIPFSGHTIQSRRGLFPVHESPMITTKPFVAVKCSLTTSTDLM). D329, D333, N473, and E481 together coordinate Mg(2+). The short motif at 329-333 (DDFFD) is the DDXXD motif element.

This sequence belongs to the terpene synthase family. Mg(2+) serves as cofactor.

It is found in the plastid. Its subcellular location is the chloroplast. The catalysed reaction is (+)-copalyl diphosphate = miltiradiene + diphosphate. The protein operates within secondary metabolite biosynthesis; terpenoid biosynthesis. In terms of biological role, involved in the biosynthesis of ent-kaurene diterpenoids natural products such as oridonin, miltiradiene, eriocalyxin B and nezukol, known to exhibit antitumor, anti-inflammatory and antibacterial activities. Catalyzes the conversion of (+)-copalyl diphosphate ((+)-CPP) to miltiradiene. The polypeptide is Miltiradiene synthase KSL2, chloroplastic (Isodon japonicus (Scutellaria japonica)).